The following is a 421-amino-acid chain: MFSPGTMVEVSSKINEGEVVWVPSMVIKEFKEDDEYKYIVKDKSFSCEGKKARPNKTVDLSSLRPIPVSVDEYQLEENVEVFLDGMGWRHGRVMGSQERAIGTLSQKWYFVRLESTKKQLTFKQSDLRPLKVWEDGVWKVLQTRELSFTQGSGDKTGDSVRNANESDPPLTPPPGIITPPLKQIEAGTQRKALSKKTLPRNQNGSGNDSTLENENSEDNNRKRKREENLGCVASVEQDKPKDTTMVLPFEKKLRIWETLESMEVFKTVPQSPHFSPLLVESREDSREMSAVGMMLTFFGLLDEVKALQHNDPISFFISLTNSFAELEKHGFNVKAPQSRINKLLSLRDRQSKKTEELKDAEKVTAEKESVKAENKRKILELQRLNEEMDKEIAQSKSCAAKIVQQLDDVKLEFLATASAPW.

Composition is skewed to polar residues over residues 149 to 165 (TQGS…NANE) and 199 to 213 (PRNQ…TLEN). Residues 149 to 229 (TQGSGDKTGD…NRKRKREENL (81 aa)) are disordered. One can recognise a DUF724 domain in the interval 246–420 (VLPFEKKLRI…LEFLATASAP (175 aa)). The stretch at 361–397 (EKVTAEKESVKAENKRKILELQRLNEEMDKEIAQSKS) forms a coiled coil.

As to expression, expressed in leaves and flowers, and at lower levels in roots, stems and siliques.

It is found in the nucleus. In terms of biological role, may be involved in the polar growth of plant cells via transportation of RNAs. The sequence is that of DUF724 domain-containing protein 8 from Arabidopsis thaliana (Mouse-ear cress).